The primary structure comprises 115 residues: MEAKIQFIKGLDEKVLPDVRLTRSKDGSTGTATFRFKNPNILDKTTAKEGEITGMYLIDEEGILETRDVNARFVNGKPEAIESIYIMKSPEAWDRFMRFMERYGETNGLVFSKAS.

Belongs to the Psb28 family. Part of the photosystem II complex.

It is found in the plastid. The protein resides in the chloroplast thylakoid membrane. The chain is Photosystem II reaction center Psb28 protein from Phaeodactylum tricornutum (strain CCAP 1055/1).